Here is a 209-residue protein sequence, read N- to C-terminus: Histidine biosynthesis bifunctional protein HisIE (209 aa).

Positions 1–116 (MKQADELRFN…EEQAADRFGI (116 aa)) are phosphoribosyl-AMP cyclohydrolase. The interval 117–209 (MNELERVIAE…LKKRHSEIEE (93 aa)) is phosphoribosyl-ATP pyrophosphohydrolase.

In the N-terminal section; belongs to the PRA-CH family. It in the C-terminal section; belongs to the PRA-PH family.

The protein localises to the cytoplasm. The catalysed reaction is 1-(5-phospho-beta-D-ribosyl)-ATP + H2O = 1-(5-phospho-beta-D-ribosyl)-5'-AMP + diphosphate + H(+). It carries out the reaction 1-(5-phospho-beta-D-ribosyl)-5'-AMP + H2O = 1-(5-phospho-beta-D-ribosyl)-5-[(5-phospho-beta-D-ribosylamino)methylideneamino]imidazole-4-carboxamide. Its pathway is amino-acid biosynthesis; L-histidine biosynthesis; L-histidine from 5-phospho-alpha-D-ribose 1-diphosphate: step 2/9. The protein operates within amino-acid biosynthesis; L-histidine biosynthesis; L-histidine from 5-phospho-alpha-D-ribose 1-diphosphate: step 3/9. This chain is Histidine biosynthesis bifunctional protein HisIE (hisI), found in Bacillus subtilis (strain 168).